A 371-amino-acid polypeptide reads, in one-letter code: Succinyl-diaminopimelate desuccinylase (371 aa).

Residue histidine 68 participates in Zn(2+) binding. The active site involves aspartate 70. Position 99 (aspartate 99) interacts with Zn(2+). Glutamate 130 serves as the catalytic Proton acceptor. Zn(2+) is bound by residues glutamate 131, glutamate 159, and histidine 344.

The protein belongs to the peptidase M20A family. DapE subfamily. Homodimer. Zn(2+) is required as a cofactor. Requires Co(2+) as cofactor.

The enzyme catalyses N-succinyl-(2S,6S)-2,6-diaminopimelate + H2O = (2S,6S)-2,6-diaminopimelate + succinate. It functions in the pathway amino-acid biosynthesis; L-lysine biosynthesis via DAP pathway; LL-2,6-diaminopimelate from (S)-tetrahydrodipicolinate (succinylase route): step 3/3. Catalyzes the hydrolysis of N-succinyl-L,L-diaminopimelic acid (SDAP), forming succinate and LL-2,6-diaminopimelate (DAP), an intermediate involved in the bacterial biosynthesis of lysine and meso-diaminopimelic acid, an essential component of bacterial cell walls. This is Succinyl-diaminopimelate desuccinylase from Acidiphilium cryptum (strain JF-5).